We begin with the raw amino-acid sequence, 116 residues long: Outer membrane protein assembly factor BamE (116 aa).

An N-terminal signal peptide occupies residues M1–G22. C23 is lipidated: N-palmitoyl cysteine. The S-diacylglycerol cysteine moiety is linked to residue C23.

It belongs to the BamE family. As to quaternary structure, part of the Bam complex, which is composed of the outer membrane protein BamA, and four lipoproteins BamB, BamC, BamD and BamE.

The protein resides in the cell outer membrane. Its function is as follows. Part of the outer membrane protein assembly complex, which is involved in assembly and insertion of beta-barrel proteins into the outer membrane. The polypeptide is Outer membrane protein assembly factor BamE (Yersinia pestis).